The primary structure comprises 203 residues: uncharacterized protein (203 aa).

The PilZ domain maps to 90–188; that stretch reads EKRQHVRVQP…YENIIGRYVM (99 aa).

To A.aeolicus aq_820 and aq_1583.

This is an uncharacterized protein from Aquifex aeolicus (strain VF5).